The chain runs to 223 residues: Endonuclease V (223 aa).

Aspartate 35 and aspartate 103 together coordinate Mg(2+).

This sequence belongs to the endonuclease V family. Mg(2+) is required as a cofactor.

Its subcellular location is the cytoplasm. The catalysed reaction is Endonucleolytic cleavage at apurinic or apyrimidinic sites to products with a 5'-phosphate.. Functionally, DNA repair enzyme involved in the repair of deaminated bases. Selectively cleaves double-stranded DNA at the second phosphodiester bond 3' to a deoxyinosine leaving behind the intact lesion on the nicked DNA. In Salmonella paratyphi A (strain ATCC 9150 / SARB42), this protein is Endonuclease V.